Consider the following 280-residue polypeptide: Tumor necrosis factor ligand superfamily member 6 (280 aa).

At 1 to 80 (MQQPFNYPYP…KKRGNHSTGL (80 aa)) the chain is on the cytoplasmic side. The tract at residues 20–70 (SSPWAPPGTVLPCPTSVPRRPGQRRPPPPPPPPPLPPPPPSPLPPLPLPPL) is disordered. Over residues 43–69 (RRPPPPPPPPPLPPPPPSPLPPLPLPP) the composition is skewed to pro residues. The chain crosses the membrane as a helical; Signal-anchor for type II membrane protein span at residues 81–101 (CLLVMFFMVLVALVGLGLGMF). At 102–280 (QLFHLQKELA…SQTFFGLYKL (179 aa)) the chain is on the extracellular side. The segment at 117–155 (TSQKHTASSLEKQIGHPSPPPEKKEQRKVAHLTGKPNSR) is disordered. The region spanning 144–280 (KVAHLTGKPN…SQTFFGLYKL (137 aa)) is the THD domain. An N-linked (GlcNAc...) asparagine glycan is attached at Asn-183. A disulfide bridge links Cys-201 with Cys-232. N-linked (GlcNAc...) asparagine glycans are attached at residues Asn-249 and Asn-259.

Belongs to the tumor necrosis factor family. As to quaternary structure, homotrimer. Interacts with ARHGAP9, BAIAP2L1, BTK, CACNB3, CACNB4, CRK, DLG2, DNMBP, DOCK4, EPS8L3, FGR, FYB1, FYN, HCK, ITK, ITSN2, KALRN, LYN, MACC1, MIA, MPP4, MYO15A, NCF1, NCK1, NCK2, NCKIPSD, OSTF1, PIK3R1, PSTPIP1, RIMBP3C, SAMSN1, SH3GL3, SH3PXD2B, SH3PXD2A, SH3RF2, SKAP2, SNX33, SNX9, SORBS3, SPTA1, SRC, SRGAP1, SRGAP2, SRGAP3, TEC, TJP3 and YES1. The soluble form derives from the membrane form by proteolytic processing. The membrane-bound form undergoes two successive intramembrane proteolytic cleavages. The first one is processed by ADAM10 producing an N-terminal fragment, which lacks the receptor-binding extracellular domain. This ADAM10-processed FasL (FasL APL) remnant form is still membrane anchored and further processed by SPPL2A that liberates the FasL intracellular domain (FasL ICD). FasL shedding by ADAM10 is a prerequisite for subsequent intramembrane cleavage by SPPL2A in T-cells. Post-translationally, phosphorylated by FGR on tyrosine residues; this is required for ubiquitination and subsequent internalization. In terms of processing, N-glycosylated. Glycosylation enhances apoptotic activity. Monoubiquitinated.

It is found in the cell membrane. Its subcellular location is the cytoplasmic vesicle lumen. The protein localises to the lysosome lumen. It localises to the secreted. The protein resides in the nucleus. Functionally, cytokine that binds to TNFRSF6/FAS, a receptor that transduces the apoptotic signal into cells. Involved in cytotoxic T-cell-mediated apoptosis, natural killer cell-mediated apoptosis and in T-cell development. Initiates fratricidal/suicidal activation-induced cell death (AICD) in antigen-activated T-cells contributing to the termination of immune responses. TNFRSF6/FAS-mediated apoptosis has also a role in the induction of peripheral tolerance. Binds to TNFRSF6B/DcR3, a decoy receptor that blocks apoptosis. Its function is as follows. Induces FAS-mediated activation of NF-kappa-B, initiating non-apoptotic signaling pathways. Can induce apoptosis but does not appear to be essential for this process. In terms of biological role, cytoplasmic form induces gene transcription inhibition. This Macaca fascicularis (Crab-eating macaque) protein is Tumor necrosis factor ligand superfamily member 6 (FASLG).